Here is a 308-residue protein sequence, read N- to C-terminus: Ornithine carbamoyltransferase (308 aa).

Carbamoyl phosphate is bound by residues 56 to 59, Gln83, Arg107, and 134 to 137; these read STRT and HPCQ. Residues Asn165, Asp225, and 229 to 230 contribute to the L-ornithine site; that span reads SM. Residues 266 to 267 and Arg294 contribute to the carbamoyl phosphate site; that span reads CL.

This sequence belongs to the aspartate/ornithine carbamoyltransferase superfamily. OTCase family.

It is found in the cytoplasm. The enzyme catalyses carbamoyl phosphate + L-ornithine = L-citrulline + phosphate + H(+). It functions in the pathway amino-acid biosynthesis; L-arginine biosynthesis; L-arginine from L-ornithine and carbamoyl phosphate: step 1/3. Reversibly catalyzes the transfer of the carbamoyl group from carbamoyl phosphate (CP) to the N(epsilon) atom of ornithine (ORN) to produce L-citrulline. In Paracoccus denitrificans (strain Pd 1222), this protein is Ornithine carbamoyltransferase.